The sequence spans 97 residues: Conotoxin Cal6.1b (97 aa).

Positions 1 to 22 are cleaved as a signal peptide; that stretch reads MKLTTVLVVALLVLAACQFTVT. Residues 22–46 form a disordered region; the sequence is TDNSGDDPENPSLRSAGENQNPDST. Residues 23–68 constitute a propeptide that is removed on maturation; it reads DNSGDDPENPSLRSAGENQNPDSTKTITAWATRDMTNMRRGLNRPS. Cystine bridges form between cysteine 71–cysteine 87, cysteine 78–cysteine 91, and cysteine 86–cysteine 96.

The protein belongs to the conotoxin O1 superfamily. In terms of tissue distribution, expressed by the venom duct.

The protein resides in the secreted. Functionally, probable neurotoxin with unknown target. Possibly targets ion channels. In Californiconus californicus (California cone), this protein is Conotoxin Cal6.1b.